The chain runs to 424 residues: Glycerol-3-phosphate dehydrogenase [NAD(+)] (424 aa).

NAD(+) contacts are provided by residues 79–84, Phe-111, and Phe-167; that span reads GSGNWG. Lys-190 is a binding site for substrate. Ala-223 lines the NAD(+) pocket. Lys-283 acts as the Proton acceptor in catalysis. Arg-348 and Gln-377 together coordinate NAD(+). 348–349 contributes to the substrate binding site; sequence RN.

The protein belongs to the NAD-dependent glycerol-3-phosphate dehydrogenase family.

It carries out the reaction sn-glycerol 3-phosphate + NAD(+) = dihydroxyacetone phosphate + NADH + H(+). This Eremothecium gossypii (strain ATCC 10895 / CBS 109.51 / FGSC 9923 / NRRL Y-1056) (Yeast) protein is Glycerol-3-phosphate dehydrogenase [NAD(+)] (GPD).